A 429-amino-acid chain; its full sequence is 3-oxo-tetronate kinase (429 aa).

Residues Ser268, 366–369 (GGET), and Gly410 contribute to the ATP site.

Belongs to the four-carbon acid sugar kinase family.

It catalyses the reaction 3-dehydro-L-erythronate + ATP = 3-dehydro-4-O-phospho-L-erythronate + ADP + H(+). It carries out the reaction 3-dehydro-D-erythronate + ATP = 3-dehydro-4-O-phospho-D-erythronate + ADP + H(+). Catalyzes the ATP-dependent phosphorylation of 3-oxo-tetronate to 3-oxo-tetronate 4-phosphate. This is 3-oxo-tetronate kinase from Pseudomonas savastanoi pv. phaseolicola (strain 1448A / Race 6) (Pseudomonas syringae pv. phaseolicola (strain 1448A / Race 6)).